Consider the following 263-residue polypeptide: Versicolorin reductase 1 (263 aa).

4 residues coordinate NADP(+): I22, D68, N95, and R128. Catalysis depends on proton donor residues S144 and S145. Positions 159, 163, 192, and 194 each coordinate NADP(+). Y159 functions as the Proton acceptor in the catalytic mechanism. The active-site Lowers pKa of active site Tyr is the K163.

It belongs to the short-chain dehydrogenases/reductases (SDR) family.

Its subcellular location is the cytoplasm. The protein resides in the cytosol. It functions in the pathway mycotoxin biosynthesis. Its function is as follows. Versicolorin reductase; part of the fragmented gene cluster that mediates the biosynthesis of dothistromin (DOTH), a polyketide toxin very similar in structure to the aflatoxin precursor, versicolorin B. The first step of the pathway is the conversion of acetate to norsolorinic acid (NOR) and requires the fatty acid synthase subunits hexA and hexB, as well as the polyketide synthase pksA. PksA combines a hexanoyl starter unit and 7 malonyl-CoA extender units to synthesize the precursor NOR. The hexanoyl starter unit is provided to the acyl-carrier protein (ACP) domain by the fungal fatty acid synthase hexA/hexB. The second step is the conversion of NOR to averantin (AVN) and requires the norsolorinic acid ketoreductase nor1, which catalyzes the dehydration of norsolorinic acid to form (1'S)-averantin. The cytochrome P450 monooxygenase avnA then catalyzes the hydroxylation of AVN to 5'hydroxyaverantin (HAVN). The next step is performed by adhA that transforms HAVN to averufin (AVF). Averufin might then be converted to hydroxyversicolorone by cypX and avfA. Hydroxyversicolorone is further converted versiconal hemiacetal acetate (VHA) by moxY. VHA is then the substrate for the versiconal hemiacetal acetate esterase est1 to yield versiconal (VAL). Versicolorin B synthase vbsA then converts VAL to versicolorin B (VERB) by closing the bisfuran ring. Then, the activity of the versicolorin B desaturase verB leads to versicolorin A (VERA). DotB, a predicted chloroperoxidase, may perform epoxidation of the A-ring of VERA. Alternatively, a cytochrome P450, such as cypX or avnA could catalyze this step. It is also possible that another, uncharacterized, cytochrome P450 enzyme is responsible for this step. Opening of the epoxide could potentially be achieved by the epoxide hydrolase epoA. However, epoA seems not to be required for DOTH biosynthesis, but other epoxide hydrolases may have the ability to complement this hydrolysis. Alternatively, opening of the epoxide ring could be achieved non-enzymatically. The next step is the deoxygenation of ring A to yield the 5,8-dihydroxyanthraquinone which is most likely catalyzed by the NADPH dehydrogenase encoded by ver1. The last stages of DOTH biosynthesis are proposed to involve hydroxylation of the bisfuran. OrdB and norB might have oxidative roles here. An alternative possibility is that cytochrome P450 monoogenases such as avnA and cypX might perform these steps in addition to previously proposed steps. The sequence is that of Versicolorin reductase 1 from Dothistroma septosporum (Red band needle blight fungus).